The following is a 169-amino-acid chain: Anaerobic nitrite reductase NSHB2 (169 aa).

Residues 16-166 form the Globin domain; that stretch reads SFSEEQEALV…LVAAIKQEMK (151 aa). The short motif at 49 to 53 is the Homodimerization element; sequence EVAPS. Residues serine 59, lysine 73, histidine 77, arginine 107, threonine 111, and histidine 112 each coordinate heme b. The short motif at 119–131 is the Homodimerization element; it reads DAHFEVTRFALLE.

The protein belongs to the plant globin family. Homodimer. Requires heme b as cofactor. As to expression, expressed in leaves, but not in roots. Present in embryonic organs including embryos, coleoptiles and seminal roots.

Its subcellular location is the cytoplasm. It localises to the nucleus. The enzyme catalyses Fe(III)-heme b-[protein] + nitric oxide + H2O = Fe(II)-heme b-[protein] + nitrite + 2 H(+). In terms of biological role, phytoglobin that reduces nitrite to nitric oxide under anoxic conditions (e.g. during flooding or in waterlogged soil). May not function as an oxygen storage or transport protein. Has an unusually high affinity for O(2) through an hexacoordinate heme iron because of a very low dissociation constant. Promotes tolerance to low potassium K(+) conditions. In Oryza sativa subsp. japonica (Rice), this protein is Anaerobic nitrite reductase NSHB2.